Reading from the N-terminus, the 932-residue chain is 3-hydroxy-3-methylglutaryl-coenzyme A reductase (932 aa).

6 helical membrane passes run 20 to 40 (VIVC…FTGL), 59 to 79 (LSSD…YLYL), 92 to 112 (ILGI…SAVI), 113 to 133 (HLFG…LLLI), 162 to 182 (MAIL…VISI), and 193 to 213 (VFCC…MTFF). N279 is a glycosylation site (N-linked (GlcNAc...) asparagine). A helical membrane pass occupies residues 322 to 342 (ILTAILATVLASHYIFFSDLA). Positions 343–467 (TYPEKRVSIM…APRPMPELLE (125 aa)) are linker. Residues 357–367 (VVNPGSDHEDA) are compositionally biased toward basic and acidic residues. A disordered region spans residues 357 to 442 (VVNPGSDHED…SGSEDEEEEV (86 aa)). Polar residues predominate over residues 374–403 (GTLSSSPSTSDVRVIESMTSRTQACQTDPV). Low complexity predominate over residues 406–421 (SPRNSRSSSPVSSHSV). A catalytic region spans residues 468-932 (ILNVGKGPNA…APGTCTANAS (465 aa)). Active-site charge relay system residues include E575, K707, and D783. The N-linked (GlcNAc...) asparagine glycan is linked to N850. The active-site Proton donor is H882. Residue N886 is glycosylated (N-linked (GlcNAc...) asparagine). S888 carries the phosphoserine; by AMPK modification.

The protein belongs to the HMG-CoA reductase family.

Its subcellular location is the endoplasmic reticulum membrane. The enzyme catalyses (R)-mevalonate + 2 NADP(+) + CoA = (3S)-3-hydroxy-3-methylglutaryl-CoA + 2 NADPH + 2 H(+). It participates in metabolic intermediate biosynthesis; (R)-mevalonate biosynthesis; (R)-mevalonate from acetyl-CoA: step 3/3. Functionally, this transmembrane glycoprotein is involved in the control of cholesterol biosynthesis. It is the rate-limiting enzyme of sterol biosynthesis. The chain is 3-hydroxy-3-methylglutaryl-coenzyme A reductase (HMGCR) from Strongylocentrotus purpuratus (Purple sea urchin).